The chain runs to 477 residues: uncharacterized protein (477 aa).

12 helical membrane-spanning segments follow: residues 31 to 51, 60 to 80, 103 to 123, 130 to 150, 177 to 197, 205 to 225, 248 to 268, 291 to 311, 334 to 354, 359 to 379, 384 to 404, and 433 to 453; these read LLRL…LLGT, LGVP…VAPF, LWFG…SLIL, MGPA…AGVG, LLYV…GWLL, LIRV…IALW, AWGL…VMVG, VGQT…GFIW, IVAF…LFFA, IGLG…MVVV, GIAL…AVFI, and VVYV…GPLV.

Belongs to the PucC family.

It is found in the cell membrane. This is an uncharacterized protein from Rhodobacter capsulatus (Rhodopseudomonas capsulata).